A 230-amino-acid chain; its full sequence is Rab15 effector protein (230 aa).

The N-myristoyl glycine moiety is linked to residue glycine 2.

In terms of assembly, interacts with the GTP-bound form of RAB15, RAB3A-D and RAB34.

Its subcellular location is the early endosome membrane. In terms of biological role, effector that interacts with Rab GTPases in their active form (GTP-bound) including RAB15, RAB3A-D and RAB34. Controls downstream signaling such as cell proliferation and cell migration. Also regulates transferrin receptor recycling from the endocytic recycling compartment. This chain is Rab15 effector protein, found in Mus musculus (Mouse).